Reading from the N-terminus, the 103-residue chain is Large ribosomal subunit protein uL24 (103 aa).

The protein belongs to the universal ribosomal protein uL24 family. Part of the 50S ribosomal subunit.

Functionally, one of two assembly initiator proteins, it binds directly to the 5'-end of the 23S rRNA, where it nucleates assembly of the 50S subunit. In terms of biological role, one of the proteins that surrounds the polypeptide exit tunnel on the outside of the subunit. The protein is Large ribosomal subunit protein uL24 (rplX) of Bacillus spizizenii (strain ATCC 23059 / NRRL B-14472 / W23) (Bacillus subtilis subsp. spizizenii).